The following is a 323-amino-acid chain: Methenyltetrahydromethanopterin cyclohydrolase (323 aa).

This sequence belongs to the MCH family.

The protein resides in the cytoplasm. The enzyme catalyses 5,10-methenyl-5,6,7,8-tetrahydromethanopterin + H2O = N(5)-formyl-5,6,7,8-tetrahydromethanopterin + H(+). It participates in one-carbon metabolism; methanogenesis from CO(2); 5,10-methenyl-5,6,7,8-tetrahydromethanopterin from CO(2): step 3/3. In terms of biological role, catalyzes the reversible interconversion of 5-formyl-H(4)MPT to methenyl-H(4)MPT(+). The chain is Methenyltetrahydromethanopterin cyclohydrolase from Methanococcus vannielii (strain ATCC 35089 / DSM 1224 / JCM 13029 / OCM 148 / SB).